The primary structure comprises 573 residues: Probable D-xylulose kinase A (573 aa).

Residues histidine 100, arginine 171, aspartate 287, and asparagine 288 each contribute to the substrate site. ATP is bound by residues tryptophan 368, 473–474 (GG), and asparagine 477.

The protein belongs to the FGGY kinase family.

It localises to the cytoplasm. It catalyses the reaction D-xylulose + ATP = D-xylulose 5-phosphate + ADP + H(+). In terms of biological role, highly specific D-xylulose kinase which participates in the catabolism of xylose. Xylose is a major component of hemicelluloses such as xylan. Most fungi utilize D-xylose via three enzymatic reactions, xylose reductase (XR), xylitol dehydrogenase (XDH), and xylulokinase, to form xylulose 5-phosphate, which enters pentose phosphate pathway. This Aspergillus terreus (strain NIH 2624 / FGSC A1156) protein is Probable D-xylulose kinase A (xkiA).